The chain runs to 1713 residues: Serine/threonine-protein kinase MRCK beta (1713 aa).

Residues 76 to 342 (FEIIKVIGRG…IEDFKKHAFF (267 aa)) enclose the Protein kinase domain. Residues 82-90 (IGRGAFGEV) and K105 each bind ATP. D200 functions as the Proton acceptor in the catalytic mechanism. Phosphoserine; by autocatalysis is present on residues S221 and S233. Phosphothreonine; by autocatalysis is present on T239. One can recognise an AGC-kinase C-terminal domain in the interval 343-413 (EGLNWENIRN…TTESCFSDRG (71 aa)). The residue at position 423 (T423) is a Phosphothreonine. A coiled-coil region spans residues 434–649 (LENSLQIEAY…ASKERKLREH (216 aa)). The segment at 461–485 (LQESTQTVQSLHGSTRALGNSNRDK) is disordered. Positions 463 to 481 (ESTQTVQSLHGSTRALGNS) are enriched in polar residues. An Omega-N-methylarginine modification is found at R671. Coiled-coil stretches lie at residues 681–815 (QEIS…AHWE) and 882–939 (ALEA…FRAD). S927 carries the phosphoserine modification. Position 954 is a phosphotyrosine (Y954). Polar residues-rich tracts occupy residues 971 to 994 (ASDQ…TSTE) and 1001 to 1014 (RSQQ…LPNT). The tract at residues 971-1014 (ASDQETQASKLDLSPSVSVATSTEQQEDAARSQQRPSTVPLPNT) is disordered. Residues 1026–1076 (AHQFSIKSFPSPTQCSHCTSLMVGLIRQGYACEVCAFSCHVSCKDSAPQVC) form a Phorbol-ester/DAG-type zinc finger. Positions 1096 to 1215 (GTAYKGYVKV…WVGILEGLQA (120 aa)) constitute a PH domain. The region spanning 1241 to 1515 (IKTVLAAAIV…RPLNSDGSLN (275 aa)) is the CNH domain. The CRIB domain occupies 1585 to 1598 (ISNPTNFNHVAHMG). The disordered stretch occupies residues 1615–1713 (PTAQEEKQGP…EGLDQPACDA (99 aa)). Over residues 1666-1677 (DFDKEPDSDSTK) the composition is skewed to basic and acidic residues. S1682, S1684, S1688, S1692, and S1695 each carry phosphoserine.

This sequence belongs to the protein kinase superfamily. AGC Ser/Thr protein kinase family. DMPK subfamily. In terms of assembly, homodimer and homotetramer via the coiled coil regions. Interacts tightly with GTP-bound but not GDP-bound CDC42. Interacts with TJP1; this interaction requires the presence of catalytically active CDC42. Forms a tripartite complex with MYO18A and LURAP1 with the latter acting as an adapter connecting CDC42BPB and MYO18A. LURAP1 binding results in activation of CDC42BPB by abolition of its negative autoregulation. Interacts with STRIP1, STRN3 and SIKE1. Interacts with CPNE4 (via VWFA domain). Interacts with LURAP1. Interacts (via AGC-kinase C-terminal domain) with FAM89B/LRAP25 (via LRR repeat). Forms a tripartite complex with FAM89B/LRAP25 and LIMK1. The cofactor is Mg(2+). Post-translationally, proteolytically cleaved by caspases upon apoptosis induction. As to expression, expressed in all tissues examined with highest levels in lung and kidney.

Its subcellular location is the cytoplasm. The protein localises to the cell membrane. The protein resides in the cell junction. It is found in the cell projection. It localises to the lamellipodium. It carries out the reaction L-seryl-[protein] + ATP = O-phospho-L-seryl-[protein] + ADP + H(+). The catalysed reaction is L-threonyl-[protein] + ATP = O-phospho-L-threonyl-[protein] + ADP + H(+). Maintained in an inactive, closed conformation by an interaction between the kinase domain and the negative autoregulatory C-terminal coiled-coil region. Agonist binding to the phorbol ester binding site disrupts this, releasing the kinase domain to allow N-terminus-mediated dimerization and kinase activation by transautophosphorylation. Inhibited by chelerythrine chloride. In terms of biological role, serine/threonine-protein kinase which is an important downstream effector of CDC42 and plays a role in the regulation of cytoskeleton reorganization and cell migration. Regulates actin cytoskeletal reorganization via phosphorylation of PPP1R12C and MYL9/MLC2. In concert with MYO18A and LURAP1, is involved in modulating lamellar actomyosin retrograde flow that is crucial to cell protrusion and migration. Phosphorylates PPP1R12A. In concert with FAM89B/LRAP25 mediates the targeting of LIMK1 to the lamellipodium resulting in its activation and subsequent phosphorylation of CFL1 which is important for lamellipodial F-actin regulation. This is Serine/threonine-protein kinase MRCK beta from Rattus norvegicus (Rat).